The following is a 718-amino-acid chain: Polyribonucleotide nucleotidyltransferase (718 aa).

2 residues coordinate Mg(2+): Asp497 and Asp503. In terms of domain architecture, KH spans 564-623 (PRLLTMRIDPDMIGLVIGPGGKTVKSITEQTKTKIDIDDDGTVTISASEAEQAERAKQLI). An S1 motif domain is found at 633 to 701 (GEVYVGRVTR…NKGRLNLTRL (69 aa)).

It belongs to the polyribonucleotide nucleotidyltransferase family. Requires Mg(2+) as cofactor.

The protein resides in the cytoplasm. It carries out the reaction RNA(n+1) + phosphate = RNA(n) + a ribonucleoside 5'-diphosphate. Involved in mRNA degradation. Catalyzes the phosphorolysis of single-stranded polyribonucleotides processively in the 3'- to 5'-direction. The protein is Polyribonucleotide nucleotidyltransferase of Gloeothece citriformis (strain PCC 7424) (Cyanothece sp. (strain PCC 7424)).